The sequence spans 307 residues: tRNA dimethylallyltransferase (307 aa).

Position 6–13 (6–13 (GATATGKT)) interacts with ATP. A substrate-binding site is contributed by 8–13 (TATGKT). Residues 31–34 (DSMM) are interaction with substrate tRNA.

Belongs to the IPP transferase family. Monomer. Mg(2+) is required as a cofactor.

The catalysed reaction is adenosine(37) in tRNA + dimethylallyl diphosphate = N(6)-dimethylallyladenosine(37) in tRNA + diphosphate. Catalyzes the transfer of a dimethylallyl group onto the adenine at position 37 in tRNAs that read codons beginning with uridine, leading to the formation of N6-(dimethylallyl)adenosine (i(6)A). The chain is tRNA dimethylallyltransferase from Sulfurihydrogenibium sp. (strain YO3AOP1).